Here is a 489-residue protein sequence, read N- to C-terminus: MKELDPKNDISEDKLSVVGEATGGPTRNGARGPGSEGVWEPGSWPERPRGDAGAEWEPLGIPQGNKLLGGSVPACHELKAFANQGCVLVPPRLDDPTEKGACPPVRRGKNFSSTSDLSKPPMPCEEKKTYDCSECGKAFSRSSSLIKHQRIHTGEKPFECDTCGKHFIERSSLTIHQRVHTGEKPYACGDCGKAFSQRMNLTVHQRTHTGEKPYVCDVCGKAFRKTSSLTQHERIHTGEKPYACGDCGKAFSQNMHLIVHQRTHTGEKPYVCPECGRAFSQNMHLTEHQRTHTGEKPYACKECGKAFNKSSSLTLHQRNHTGEKPYVCGECGKAFSQSSYLIQHQRFHIGVKPFECSECGKAFSKNSSLTQHQRIHTGEKPYECYICKKHFTGRSSLIVHQIVHTGEKPYVCGECGKAFSQSAYLIEHQRIHTGEKPYRCGQCGKSFIKNSSLTVHQRIHTGEKPYRCGECGKTFSRNTNLTRHLRIHT.

Positions 1–15 (MKELDPKNDISEDKL) are enriched in basic and acidic residues. Disordered regions lie at residues 1–61 (MKEL…PLGI) and 98–122 (EKGA…KPPM). 13 C2H2-type zinc fingers span residues 130 to 152 (YDCS…QRIH), 158 to 180 (FECD…QRVH), 186 to 208 (YACG…QRTH), 214 to 236 (YVCD…ERIH), 242 to 264 (YACG…QRTH), 270 to 292 (YVCP…QRTH), 298 to 320 (YACK…QRNH), 326 to 348 (YVCG…QRFH), 354 to 376 (FECS…QRIH), 382 to 404 (YECY…QIVH), 410 to 432 (YVCG…QRIH), 438 to 460 (YRCG…QRIH), and 466 to 488 (YRCG…LRIH).

It belongs to the krueppel C2H2-type zinc-finger protein family. Highly expressed in placenta, followed by brain, testis, pancreas, heart, small intestine, muscle, uterus, prostate and peripheral blood leukocytes. Not detected in liver, lung, colon, stomach, salivary and thyroid gland.

It is found in the nucleus. May be involved in transcriptional regulation. This Homo sapiens (Human) protein is Endothelial zinc finger protein induced by tumor necrosis factor alpha (ZNF71).